Reading from the N-terminus, the 649-residue chain is 70 kDa protein (649 aa).

Disordered stretches follow at residues 28 to 80 (LRRG…DFSP), 257 to 286 (ALSL…AASD), 311 to 359 (TATS…SKQQ), and 458 to 550 (QSAE…PSSL). The span at 268 to 279 (KSTSPCNNSQLP) shows a compositional bias: polar residues. Residues 330 to 349 (RLQRSLHLHSRSPHSSHFRP) show a composition bias toward basic residues. Polar residues predominate over residues 504 to 515 (DVSNSETKNCPS). 2 stretches are compositionally biased toward low complexity: residues 524–533 (PNHLHPLLPG) and 540–550 (PRQLSPSPSSL).

It belongs to the tymoviridae protein p69 family.

The sequence is that of 70 kDa protein from Solanum lycopersicum (Tomato).